The following is a 2588-amino-acid chain: Histone-lysine N-methyltransferase, H3 lysine-36 specific (2588 aa).

Ser-110 and Ser-118 each carry phosphoserine. 2 disordered regions span residues Gly-209–Thr-264 and Leu-277–Glu-307. Positions Glu-235–Asn-249 are enriched in basic and acidic residues. The span at Gly-298 to Glu-307 shows a compositional bias: polar residues. Residues Ser-380 and Ser-383 each carry the phosphoserine modification. A disordered region spans residues Ser-383–Ile-403. Lys-802 participates in a covalent cross-link: Glycyl lysine isopeptide (Lys-Gly) (interchain with G-Cter in SUMO2). Disordered regions lie at residues Ala-830 to Arg-899, Glu-947 to Glu-987, and Phe-1008 to Asn-1133. Residues Gly-855–Gln-874 show a composition bias toward polar residues. Low complexity predominate over residues Ser-881–Ala-895. Residues Phe-1008–Pro-1033 show a composition bias toward basic and acidic residues. The segment covering Pro-1054–Asn-1073 has biased composition (basic residues). Residue Lys-1237 forms a Glycyl lysine isopeptide (Lys-Gly) (interchain with G-Cter in SUMO2) linkage. The disordered stretch occupies residues Ala-1279–Lys-1324. At Ser-1408 the chain carries Phosphoserine. PHD-type zinc fingers lie at residues Glu-1441–Gly-1487, Ile-1488–Ala-1544, and Val-1605–Gly-1649. Residues Tyr-1654 to Gly-1716 form the PWWP domain. An AWS domain is found at Ser-1788 to Gln-1838. The region spanning Pro-1840 to Asn-1957 is the SET domain. S-adenosyl-L-methionine is bound by residues Arg-1850 to Trp-1852, Thr-1892 to Tyr-1895, Asn-1918 to His-1919, Asn-1963, and Lys-1969. The interval Leu-1958–Gly-1964 is inhibits enzyme activity in the absence of bound histone. Positions Gly-1964 to Gly-1980 constitute a Post-SET domain. The segment at Val-1989–Glu-2010 is disordered. Positions Arg-1995 to Arg-2006 are enriched in basic residues. Residues Glu-2016 to Asp-2063 form a PHD-type 4; atypical zinc finger. Disordered regions lie at residues Pro-2105 to Glu-2320, Lys-2333 to His-2423, Tyr-2447 to Gly-2521, and Arg-2560 to Lys-2588. Basic and acidic residues predominate over residues Arg-2179–Asp-2196. The segment covering Gly-2201–Arg-2212 has biased composition (polar residues). A compositionally biased stretch (basic and acidic residues) spans Pro-2213–Pro-2223. Residues Ser-2232 to Glu-2249 show a composition bias toward low complexity. Residues Arg-2250–Lys-2261 are compositionally biased toward basic and acidic residues. Position 2267 is a phosphoserine (Ser-2267). Residue Thr-2360 is modified to Phosphothreonine. Phosphoserine is present on Ser-2369. A Glycyl lysine isopeptide (Lys-Gly) (interchain with G-Cter in SUMO2) cross-link involves residue Lys-2509.

The protein belongs to the class V-like SAM-binding methyltransferase superfamily. In terms of assembly, interacts with AR DNA- and ligand-binding domains. Interacts with the ligand-binding domains of RARA and THRA in the absence of ligand; in the presence of ligand the interaction is severely disrupted but some binding still occurs. Interacts with the ligand-binding domains of RXRA and ESRRA only in the presence of ligand. Interacts with ZNF496. As to expression, expressed in the embryo and the outer region of the uterine decidua at early post-implantation 5.5 dpc stage. Uniformly expressed in embryonic and extraembryonic tissues during gastrulation stage 7.5 dpc. Expressed differentially after stage 14.5 dpc with highest expression in proliferating cells. Enriched in the telencephalic region of the brain, spinal cord, intestinal crypt, tooth buds, thymus and salivary glands at stage 16.5 dpc. Also expressed in the ossification region of developing bones and in the periosteum.

The protein localises to the nucleus. It is found in the chromosome. The enzyme catalyses L-lysyl(36)-[histone H3] + 2 S-adenosyl-L-methionine = N(6),N(6)-dimethyl-L-lysyl(36)-[histone H3] + 2 S-adenosyl-L-homocysteine + 2 H(+). Functionally, histone methyltransferase that dimethylates Lys-36 of histone H3 (H3K36me2). Transcriptional intermediary factor capable of negatively influencing transcription. May also positively influence transcription. Essential for early post-implantation development. The protein is Histone-lysine N-methyltransferase, H3 lysine-36 specific of Mus musculus (Mouse).